The chain runs to 409 residues: Bone morphogenetic protein 4 (409 aa).

Positions 1–24 (MIPGNRMLMVVLLCQVLLGGASHA) are cleaved as a signal peptide. A propeptide spanning residues 25-293 (SLIPETGKKK…ALTRRRRAKR (269 aa)) is cleaved from the precursor. Serine 91 is subject to Phosphoserine. N-linked (GlcNAc...) asparagine glycosylation is found at asparagine 144 and asparagine 209. A disordered region spans residues 284-308 (ALTRRRRAKRSPKHHPQRARKKNKN). 3 cysteine pairs are disulfide-bonded: cysteine 309-cysteine 374, cysteine 338-cysteine 406, and cysteine 342-cysteine 408. Asparagine 351 and asparagine 366 each carry an N-linked (GlcNAc...) asparagine glycan.

The protein belongs to the TGF-beta family. In terms of assembly, homodimer; disulfide-linked. Interacts with GREM2. Part of a complex consisting of TWSG1 and CHRD. Interacts with the serine proteases, HTRA1 and HTRA3; the interaction with either inhibits BMP4-mediated signaling. The HTRA protease activity is required for this inhibition. Interacts with SOSTDC1. Interacts with FBN1 (via N-terminal domain) and FBN2. Interacts with type I receptor BMPR1A. Interacts with type II receptor BMPR2. Interacts with FSTL1; this interaction inhibits the activation of the BMP4/Smad1/5/8 signaling pathway. Interacts with SCUBE3. Interacts with TGFBR3.

Its subcellular location is the secreted. It localises to the extracellular space. The protein resides in the extracellular matrix. Growth factor of the TGF-beta superfamily that plays essential roles in many developmental processes, including neurogenesis, vascular development, angiogenesis and osteogenesis. Acts in concert with PTHLH/PTHRP to stimulate ductal outgrowth during embryonic mammary development and to inhibit hair follicle induction. Initiates the canonical BMP signaling cascade by associating with type I receptor BMPR1A and type II receptor BMPR2. Once all three components are bound together in a complex at the cell surface, BMPR2 phosphorylates and activates BMPR1A. In turn, BMPR1A propagates signal by phosphorylating SMAD1/5/8 that travel to the nucleus and act as activators and repressors of transcription of target genes. Positively regulates the expression of odontogenic development regulator MSX1 via inducing the IPO7-mediated import of SMAD1 to the nucleus. Required for MSX1-mediated mesenchymal molar tooth bud development beyond the bud stage, via promoting Wnt signaling. Acts as a positive regulator of odontoblast differentiation during mesenchymal tooth germ formation, expression is repressed during the bell stage by MSX1-mediated inhibition of CTNNB1 signaling. Able to induce its own expression in dental mesenchymal cells and also in the neighboring dental epithelial cells via an MSX1-mediated pathway. Can also signal through non-canonical BMP pathways such as ERK/MAP kinase, PI3K/Akt, or SRC cascades. For example, induces SRC phosphorylation which, in turn, activates VEGFR2, leading to an angiogenic response. This Bos taurus (Bovine) protein is Bone morphogenetic protein 4.